We begin with the raw amino-acid sequence, 237 residues long: Cytidylate kinase (237 aa).

Gly-15–Thr-23 serves as a coordination point for ATP.

This sequence belongs to the cytidylate kinase family. Type 1 subfamily.

Its subcellular location is the cytoplasm. The catalysed reaction is CMP + ATP = CDP + ADP. It carries out the reaction dCMP + ATP = dCDP + ADP. In Coxiella burnetii (strain RSA 493 / Nine Mile phase I), this protein is Cytidylate kinase.